Here is a 249-residue protein sequence, read N- to C-terminus: Ubiquinone biosynthesis O-methyltransferase (249 aa).

S-adenosyl-L-methionine contacts are provided by R41, G72, D93, and M136.

This sequence belongs to the methyltransferase superfamily. UbiG/COQ3 family.

The enzyme catalyses a 3-demethylubiquinol + S-adenosyl-L-methionine = a ubiquinol + S-adenosyl-L-homocysteine + H(+). It carries out the reaction a 3-(all-trans-polyprenyl)benzene-1,2-diol + S-adenosyl-L-methionine = a 2-methoxy-6-(all-trans-polyprenyl)phenol + S-adenosyl-L-homocysteine + H(+). It participates in cofactor biosynthesis; ubiquinone biosynthesis. Functionally, O-methyltransferase that catalyzes the 2 O-methylation steps in the ubiquinone biosynthetic pathway. This chain is Ubiquinone biosynthesis O-methyltransferase, found in Methylobacterium nodulans (strain LMG 21967 / CNCM I-2342 / ORS 2060).